A 154-amino-acid polypeptide reads, in one-letter code: MGLSDGEWQLVLHVWGKVEADLAGHGQEVLIRLFKGHPETLEKFNKFKHIKSEDEMKASEDLKKHGVTVLTALGGVLKKKGHHEAEIKPLAQSHATKHKIPIKYLEFISEAIIHVLQSKHPGBFGADABGAMNKALELFRKDIAAKYKELGFQG.

The Globin domain occupies 2–148; the sequence is GLSDGEWQLV…FRKDIAAKYK (147 aa). The residue at position 4 (Ser-4) is a Phosphoserine. His-65 contributes to the nitrite binding site. His-65 is a binding site for O2. Thr-68 bears the Phosphothreonine mark. His-94 is a heme b binding site.

The protein belongs to the globin family. Monomeric.

The protein localises to the cytoplasm. Its subcellular location is the sarcoplasm. The catalysed reaction is Fe(III)-heme b-[protein] + nitric oxide + H2O = Fe(II)-heme b-[protein] + nitrite + 2 H(+). It carries out the reaction H2O2 + AH2 = A + 2 H2O. Its function is as follows. Monomeric heme protein which primary function is to store oxygen and facilitate its diffusion within muscle tissues. Reversibly binds oxygen through a pentacoordinated heme iron and enables its timely and efficient release as needed during periods of heightened demand. Depending on the oxidative conditions of tissues and cells, and in addition to its ability to bind oxygen, it also has a nitrite reductase activity whereby it regulates the production of bioactive nitric oxide. Under stress conditions, like hypoxia and anoxia, it also protects cells against reactive oxygen species thanks to its pseudoperoxidase activity. This is Myoglobin (MB) from Castor fiber (Eurasian beaver).